The following is a 454-amino-acid chain: GTPase Der (454 aa).

EngA-type G domains lie at 4–167 and 188–363; these read AIVA…SEDK and LELA…ASWQ. GTP is bound by residues 10-17, 56-60, 121-124, 194-201, 241-245, and 306-309; these read GKPNVGKS, DTPGL, NKTE, GRPNCGKS, DTAGV, and NKWD. The KH-like domain maps to 364–450; that stretch reads KRVTTGTLNQ…PVRLSFVKGK (87 aa).

The protein belongs to the TRAFAC class TrmE-Era-EngA-EngB-Septin-like GTPase superfamily. EngA (Der) GTPase family. Associates with the 50S ribosomal subunit.

Its function is as follows. GTPase that plays an essential role in the late steps of ribosome biogenesis. This is GTPase Der from Orientia tsutsugamushi (strain Ikeda) (Rickettsia tsutsugamushi).